We begin with the raw amino-acid sequence, 145 residues long: MLSIIQRVNCANVVVDNQKVADINKGILALVCVEKEDTQQNFEKMADKIIKYRIFEDDAGKMNLSLADIDAEIILVPQFTLAADTKKGNRPSFSSGCPPEIAKEKFKEFENIFRRKYNKVQTGIFGADMKVSLTNDGPVTFSFKI.

A Gly-cisPro motif, important for rejection of L-amino acids motif is present at residues 137–138 (GP).

Belongs to the DTD family. As to quaternary structure, homodimer.

It is found in the cytoplasm. It carries out the reaction glycyl-tRNA(Ala) + H2O = tRNA(Ala) + glycine + H(+). It catalyses the reaction a D-aminoacyl-tRNA + H2O = a tRNA + a D-alpha-amino acid + H(+). An aminoacyl-tRNA editing enzyme that deacylates mischarged D-aminoacyl-tRNAs. Also deacylates mischarged glycyl-tRNA(Ala), protecting cells against glycine mischarging by AlaRS. Acts via tRNA-based rather than protein-based catalysis; rejects L-amino acids rather than detecting D-amino acids in the active site. By recycling D-aminoacyl-tRNA to D-amino acids and free tRNA molecules, this enzyme counteracts the toxicity associated with the formation of D-aminoacyl-tRNA entities in vivo and helps enforce protein L-homochirality. This chain is D-aminoacyl-tRNA deacylase, found in Francisella tularensis subsp. novicida (strain U112).